The chain runs to 423 residues: Glutamyl-tRNA reductase (423 aa).

Residues 49 to 52, Ser-109, 114 to 116, and Gln-120 contribute to the substrate site; these read TCNR and EGQ. Cys-50 (nucleophile) is an active-site residue. Residue 189–194 participates in NADP(+) binding; that stretch reads GAGETG.

This sequence belongs to the glutamyl-tRNA reductase family. Homodimer.

The enzyme catalyses (S)-4-amino-5-oxopentanoate + tRNA(Glu) + NADP(+) = L-glutamyl-tRNA(Glu) + NADPH + H(+). It functions in the pathway porphyrin-containing compound metabolism; protoporphyrin-IX biosynthesis; 5-aminolevulinate from L-glutamyl-tRNA(Glu): step 1/2. Its pathway is porphyrin-containing compound metabolism; chlorophyll biosynthesis. Catalyzes the NADPH-dependent reduction of glutamyl-tRNA(Glu) to glutamate 1-semialdehyde (GSA). This chain is Glutamyl-tRNA reductase, found in Chlorobium limicola (strain DSM 245 / NBRC 103803 / 6330).